Reading from the N-terminus, the 58-residue chain is Small ribosomal subunit protein bS21 (58 aa).

Positions Glu-31–Ser-42 are enriched in basic and acidic residues. The segment at Glu-31–Asn-58 is disordered. Positions Val-43–Asn-58 are enriched in basic residues.

It belongs to the bacterial ribosomal protein bS21 family.

This is Small ribosomal subunit protein bS21 from Agathobacter rectalis (strain ATCC 33656 / DSM 3377 / JCM 17463 / KCTC 5835 / VPI 0990) (Eubacterium rectale).